The following is a 417-amino-acid chain: Serine hydroxymethyltransferase (417 aa).

(6S)-5,6,7,8-tetrahydrofolate is bound by residues leucine 122 and 126 to 128 (GHL). Lysine 230 bears the N6-(pyridoxal phosphate)lysine mark. (6S)-5,6,7,8-tetrahydrofolate is bound at residue 355–357 (SPF).

The protein belongs to the SHMT family. In terms of assembly, homodimer. The cofactor is pyridoxal 5'-phosphate.

The protein localises to the cytoplasm. It catalyses the reaction (6R)-5,10-methylene-5,6,7,8-tetrahydrofolate + glycine + H2O = (6S)-5,6,7,8-tetrahydrofolate + L-serine. The protein operates within one-carbon metabolism; tetrahydrofolate interconversion. It participates in amino-acid biosynthesis; glycine biosynthesis; glycine from L-serine: step 1/1. Its function is as follows. Catalyzes the reversible interconversion of serine and glycine with tetrahydrofolate (THF) serving as the one-carbon carrier. This reaction serves as the major source of one-carbon groups required for the biosynthesis of purines, thymidylate, methionine, and other important biomolecules. Also exhibits THF-independent aldolase activity toward beta-hydroxyamino acids, producing glycine and aldehydes, via a retro-aldol mechanism. In Francisella tularensis subsp. novicida (strain U112), this protein is Serine hydroxymethyltransferase.